The following is a 174-amino-acid chain: Adenylate kinase (174 aa).

The tract at residues 12–41 is NMP; the sequence is STGDMLRAAIKAGTLLGLEAKKIIDEGGLV. Residues T13, R18, 39–41, 67–70, and Q74 contribute to the AMP site; these read GLV and GFPR. The interval 104-141 is LID; that stretch reads GRRVHLASGRTYHVTYNPPKVEGKDDVTGEDLIQRDDD. ATP is bound by residues R105 and 114–115; that span reads TY. Residues R138 and R149 each coordinate AMP.

It belongs to the adenylate kinase family. In terms of assembly, monomer.

Its subcellular location is the cytoplasm. The catalysed reaction is AMP + ATP = 2 ADP. It functions in the pathway purine metabolism; AMP biosynthesis via salvage pathway; AMP from ADP: step 1/1. Functionally, catalyzes the reversible transfer of the terminal phosphate group between ATP and AMP. Plays an important role in cellular energy homeostasis and in adenine nucleotide metabolism. The protein is Adenylate kinase of Neisseria polysaccharea.